Reading from the N-terminus, the 367-residue chain is Adenosine deaminase (367 aa).

Zn(2+) is bound by residues His46 and His48. A purine D-ribonucleoside-binding positions include 48 to 50 (HLD), Asp176, and Gly205. The segment at 174–188 (TGDGGLSHERMKEAA) is gating helix loop; regulates binding affinity for substrates and thus substrate selectivity. His230 is a Zn(2+) binding site. A purine D-ribonucleoside-binding residues include Glu233, His257, and Asp314. Asp314 serves as a coordination point for Zn(2+).

It belongs to the metallo-dependent hydrolases superfamily. Adenosine and AMP deaminases family. Requires Zn(2+) as cofactor.

The enzyme catalyses adenosine + H2O + H(+) = inosine + NH4(+). It carries out the reaction S-methyl-5'-thioadenosine + H2O + H(+) = S-methyl-5'-thioinosine + NH4(+). Its pathway is purine metabolism; purine nucleoside salvage. Its activity is regulated as follows. Inhibited by coformycin and methylthiocoformycin (MT-coformycin). Its function is as follows. Catalyzes the hydrolytic deamination of adenosine to produce inosine. Unlike mammalian adenosine deaminases, also catalyzes the deamination of 5'-methylthioadenosine (MTA), a by-product of polyamine biosynthesis, to produce 5'-methylthioinosine (MTI). Plays an essential role in the purine salvage pathway which allows the parasite to use host cell purines for the synthesis of nucleic acids. The chain is Adenosine deaminase from Plasmodium falciparum (isolate 3D7).